Here is a 487-residue protein sequence, read N- to C-terminus: Homeobox protein homothorax (487 aa).

Disordered regions lie at residues 25–49 (YDPHAGHRPPGLQGLPSHHSPHMTH), 210–292 (DTTK…SSLN), and 333–369 (NFGTSASGDASNASIGSGEGTGEEDDDASGKKNQKKR). Residues 127–211 (GGDVCSSESF…IDLVIDERDT (85 aa)) form the MEIS N-terminal domain. Polar residues-rich tracts occupy residues 227–237 (NADSTSHTDGA) and 333–345 (NFGTSASGDASNA). Positions 365-427 (NQKKRGIFPK…NARRRIVQPM (63 aa)) form a DNA-binding region, homeobox; TALE-type.

This sequence belongs to the TALE/MEIS homeobox family. Interacts with exd; required for nuclear translocation of exd. In the wing disk, the expression is present in the regions corresponding to notum, wing hinge and ventral pleura. In the leg disk, the expression is in the periphery region, corresponding to the proximal segments of the legs. In the antennal disk, the expression is in all but the arista region. In the eye disk, the expression is strong in the anterior region surrounding the eye field, including the regions corresponding to ptilinum, ocellus and head capsules, and weak in the posterior and lateral margins of the eye disk. Expressed specifically in maturating inner photoreceptors of the DRA and maintained through adulthood.

It localises to the nucleus. Its function is as follows. All isoforms are required for patterning of the embryonic cuticle. Acts with exd to delimit the eye field and prevent inappropriate eye development. Isoforms that carry the homeodomain are required for proper localization of chordotonal organs within the peripheral nervous system and antennal identity; required to activate antennal-specific genes, such as sal and to repress the leg-like expression of dac. Necessary for the nuclear localization of the essential HOX cofactor, extradenticle (exd). Both necessary and sufficient for inner photoreceptors to adopt the polarization-sensitive 'dorsal rim area' (DRA) of the eye fate instead of the color-sensitive default state. This occurs by increasing rhabdomere size and uncoupling R7-R8 communication to allow both cells to express the same opsin rather than different ones as required for color vision. This Drosophila melanogaster (Fruit fly) protein is Homeobox protein homothorax.